The following is a 264-amino-acid chain: uncharacterized protein (264 aa).

This is an uncharacterized protein from Escherichia coli (strain K12).